Here is a 98-residue protein sequence, read N- to C-terminus: Lipolysis-activating peptide 1-alpha chain (98 aa).

The signal sequence occupies residues M1–G22. An LCN-type CS-alpha/beta domain is found at P26–K89. Cystine bridges form between C40–C63, C49–C68, and C53–C70. A Lysine amide modification is found at K96.

It belongs to the long (3 C-C) scorpion toxin superfamily. In terms of assembly, monomer (edited version) and heterodimer (non-edited version) of this alpha chain and a beta chain (AC B8XGZ8). In terms of tissue distribution, expressed by the venom gland.

It is found in the secreted. In terms of biological role, the heterodimer non-edited LVP1 induces lipolysis in rat adipocytes. Induction of lipolysis by LVP1 appears to be mediated through the beta-2 adrenergic receptor pathway (ADRB2). The edited BmKBTx-like, similar to beta-toxins, may modulate voltage-gated sodium channels (Nav) and may block voltage-gated potassium channels (Kv). In Buthus israelis (Israeli scorpion), this protein is Lipolysis-activating peptide 1-alpha chain.